A 412-amino-acid polypeptide reads, in one-letter code: Proline-rich protein 30 (412 aa).

Composition is skewed to polar residues over residues 1–15 and 23–39; these read MLPQNKDQVLPQTSV and GFSQLVDSSPHNLQPLS. Disordered regions lie at residues 1–88, 123–174, and 317–412; these read MLPQ…HPYS, PLTP…SNRQ, and RPKE…KSSV. Low complexity-rich tracts occupy residues 50 to 59, 126 to 142, and 334 to 350; these read PFSSTQSRRP, PSFSPSQPQNSSLPHSP, and QLPASQPPAAQARADPV. The span at 353 to 372 shows a compositional bias: polar residues; the sequence is TPSQTRSFRSAGLQSPNSPR.

The protein is Proline-rich protein 30 (PRR30) of Homo sapiens (Human).